Reading from the N-terminus, the 73-residue chain is Toxin Td12 (73 aa).

The N-terminal stretch at 1 to 7 (IGMVIEC) is a signal peptide. Residues 8–70 (KDGYLMEPNG…TWDRATNTCG (63 aa)) enclose the LCN-type CS-alpha/beta domain. Intrachain disulfides connect Cys18-Cys69, Cys22-Cys44, Cys30-Cys50, and Cys34-Cys52. Arg71 carries the arginine amide modification.

The protein belongs to the long (4 C-C) scorpion toxin superfamily. Sodium channel inhibitor family. Beta subfamily. Expressed by the venom gland.

It is found in the secreted. Its function is as follows. Beta toxins bind voltage-independently at site-4 of sodium channels (Nav) and shift the voltage of activation toward more negative potentials thereby affecting sodium channel activation and promoting spontaneous and repetitive firing. The polypeptide is Toxin Td12 (Tityus discrepans (Venezuelan scorpion)).